A 140-amino-acid polypeptide reads, in one-letter code: Nucleoside diphosphate kinase (140 aa).

The ATP site is built by lysine 11, phenylalanine 59, arginine 87, threonine 93, arginine 104, and asparagine 114. Residue histidine 117 is the Pros-phosphohistidine intermediate of the active site.

This sequence belongs to the NDK family. As to quaternary structure, homotetramer. Requires Mg(2+) as cofactor.

It localises to the cytoplasm. The catalysed reaction is a 2'-deoxyribonucleoside 5'-diphosphate + ATP = a 2'-deoxyribonucleoside 5'-triphosphate + ADP. It catalyses the reaction a ribonucleoside 5'-diphosphate + ATP = a ribonucleoside 5'-triphosphate + ADP. Functionally, major role in the synthesis of nucleoside triphosphates other than ATP. The ATP gamma phosphate is transferred to the NDP beta phosphate via a ping-pong mechanism, using a phosphorylated active-site intermediate. The sequence is that of Nucleoside diphosphate kinase from Methylocella silvestris (strain DSM 15510 / CIP 108128 / LMG 27833 / NCIMB 13906 / BL2).